A 399-amino-acid chain; its full sequence is Paraneoplastic antigen-like protein 6A (399 aa).

This sequence belongs to the PNMA family. Expressed in the brain.

The chain is Paraneoplastic antigen-like protein 6A from Homo sapiens (Human).